Reading from the N-terminus, the 150-residue chain is Detocs response regulatory protein DtcB (150 aa).

One can recognise a Response regulatory domain in the interval 2–150 (KILIADDNIQ…TDLIKKITEL (149 aa)). Aspartate 54 carries the post-translational modification 4-aspartylphosphate.

Probably phosphorylated by DtcA.

Functionally, possible phosphate scavenger member of the two-component regulatory system Detocs that confers resistance to bacteriophage. When the system (DtcA-DtcB-DtcC) is expressed in a susceptible E.coli (strain MG1655) it confers resistance to bacteriophages T2, T4, T5, T7, SECphi4, SECphi6 and SECphi27; the level of resistance varies, resistance to T2, T7 and SECphi4 is not very high. DtcA probably autophosphorylates upon sensing viral infection, and subsequently transfers the phosphate signal to DtcC which activates it, leading to an antiviral defense; DtcB (this subunit) may scavenge phosphorylation signals from accidental activation of DtcA. The polypeptide is Detocs response regulatory protein DtcB (Enterobacter cloacae (strain JD6301)).